Reading from the N-terminus, the 417-residue chain is Riboflavin biosynthesis protein RibBA (417 aa).

A DHBP synthase region spans residues 1 to 204 (MTRFDSIERA…IADLIAWRRK (204 aa)). D-ribulose 5-phosphate-binding positions include 28-29 (RE), aspartate 33, 141-145 (RPGHT), and glutamate 165. Glutamate 29 contacts Mg(2+). Mg(2+) is bound at residue histidine 144. Residues 205 to 417 (HEKHVERVAS…LDDFEAGEML (213 aa)) are GTP cyclohydrolase II. GTP is bound at residue 259–263 (RVHSE). 3 residues coordinate Zn(2+): cysteine 264, cysteine 275, and cysteine 277. GTP contacts are provided by residues glutamine 280, 303-305 (EGR), and threonine 325. The active-site Proton acceptor; for GTP cyclohydrolase activity is aspartate 337. Residue arginine 339 is the Nucleophile; for GTP cyclohydrolase activity of the active site. Threonine 360 and lysine 365 together coordinate GTP.

It in the N-terminal section; belongs to the DHBP synthase family. The protein in the C-terminal section; belongs to the GTP cyclohydrolase II family. Mg(2+) serves as cofactor. Mn(2+) is required as a cofactor. Requires Zn(2+) as cofactor.

It catalyses the reaction D-ribulose 5-phosphate = (2S)-2-hydroxy-3-oxobutyl phosphate + formate + H(+). The catalysed reaction is GTP + 4 H2O = 2,5-diamino-6-hydroxy-4-(5-phosphoribosylamino)-pyrimidine + formate + 2 phosphate + 3 H(+). It functions in the pathway cofactor biosynthesis; riboflavin biosynthesis; 2-hydroxy-3-oxobutyl phosphate from D-ribulose 5-phosphate: step 1/1. It participates in cofactor biosynthesis; riboflavin biosynthesis; 5-amino-6-(D-ribitylamino)uracil from GTP: step 1/4. In terms of biological role, catalyzes the conversion of D-ribulose 5-phosphate to formate and 3,4-dihydroxy-2-butanone 4-phosphate. Catalyzes the conversion of GTP to 2,5-diamino-6-ribosylamino-4(3H)-pyrimidinone 5'-phosphate (DARP), formate and pyrophosphate. The protein is Riboflavin biosynthesis protein RibBA of Rhodococcus jostii (strain RHA1).